Here is a 252-residue protein sequence, read N- to C-terminus: ATP synthase subunit a, chloroplastic (252 aa).

The next 5 helical transmembrane spans lie at 41–61, 100–120, 138–158, 204–224, and 225–245; these read GQVL…TLLA, VPFL…GALL, DINT…YAGI, LIVG…LMLL, and GVFT…AYIG.

The protein belongs to the ATPase A chain family. As to quaternary structure, F-type ATPases have 2 components, CF(1) - the catalytic core - and CF(0) - the membrane proton channel. CF(1) has five subunits: alpha(3), beta(3), gamma(1), delta(1), epsilon(1). CF(0) has four main subunits: a, b, b' and c.

The protein resides in the plastid. Its subcellular location is the chloroplast thylakoid membrane. Functionally, key component of the proton channel; it plays a direct role in the translocation of protons across the membrane. This Oedogonium cardiacum (Filamentous green alga) protein is ATP synthase subunit a, chloroplastic.